The sequence spans 101 residues: Small ribosomal subunit protein uS14 (101 aa).

The protein belongs to the universal ribosomal protein uS14 family. As to quaternary structure, part of the 30S ribosomal subunit. Contacts proteins S3 and S10.

Functionally, binds 16S rRNA, required for the assembly of 30S particles and may also be responsible for determining the conformation of the 16S rRNA at the A site. In Leptothrix cholodnii (strain ATCC 51168 / LMG 8142 / SP-6) (Leptothrix discophora (strain SP-6)), this protein is Small ribosomal subunit protein uS14.